Reading from the N-terminus, the 1484-residue chain is Cystic fibrosis transmembrane conductance regulator (1484 aa).

Over 1–77 the chain is Cytoplasmic; the sequence is MQRSPLEKAS…KLINALRRCF (77 aa). A helical membrane pass occupies residues 78–98; the sequence is FWRFMFYGIILYLGEVTKSVQ. The 285-residue stretch at 81–365 folds into the ABC transmembrane type-1 1 domain; the sequence is FMFYGIILYL…WAVQTWYDSL (285 aa). The Extracellular portion of the chain corresponds to 99–122; the sequence is PLLLGRIIASYDPDNKEERSIAIY. Residues 123-146 traverse the membrane as a helical segment; that stretch reads LGIGLCLLFVMRTLLLHPAIFGLH. Topologically, residues 147–195 are cytoplasmic; the sequence is RIGMQMRIAMFSLIYKKTLKLSSRVLDKISIGQLVSLLSNNLNKFDEGL. The helical transmembrane segment at 196-216 threads the bilayer; the sequence is ALAHFVWIAPLQVTLLMGLLW. Residues 217–222 lie on the Extracellular side of the membrane; it reads DLLQAS. A helical transmembrane segment spans residues 223–243; that stretch reads AFCGLAFLIVLALFQAGLGRM. Residues 244-298 are Cytoplasmic-facing; the sequence is MMKYRDQRAGKINERLVITSEMIENIQSVKAYCWEEAMEKMIESIRQTELKLTRK. Residues 299–319 traverse the membrane as a helical segment; that stretch reads AAYVRYFNSSAFFFSGFFVVF. Residues 320-339 are Extracellular-facing; sequence LSVLPYALIKTIVLRKIFTT. Residues 340–358 form a helical membrane-spanning segment; it reads ISFCIVLRMAVTRQFPWAV. At 359–860 the chain is on the cytoplasmic side; sequence QTWYDSLGAI…YLRYVTIHKS (502 aa). Residues W401, S434, 458–465, and Q493 each bind ATP; that span reads GSTGAGKT. Residues 423–646 form the ABC transporter 1 domain; sequence NADNSLFFSN…RPDFSSKLMG (224 aa). Residue C524 is the site of S-palmitoyl cysteine attachment. A phosphoserine mark is found at S549 and S660. The interval 654 to 833 is disordered R region; the sequence is SAERRNSIIT…EEINEEDLKE (180 aa). S670 bears the Phosphoserine; by PKA mark. Position 686 is a phosphoserine (S686). A Glycyl lysine isopeptide (Lys-Gly) (interchain with G-Cter in ubiquitin) cross-link involves residue K688. A phosphoserine mark is found at S700 and S712. Residue T717 is modified to Phosphothreonine. 5 positions are modified to phosphoserine: S737, S769, S792, S797, and S815. A helical transmembrane segment spans residues 861-881; the sequence is LVFVLIWCLVIFLAEVAISLV. An ABC transmembrane type-1 2 domain is found at 861–1157; the sequence is LVFVLIWCLV…AVNSSIDVDS (297 aa). Residues 882–920 lie on the Extracellular side of the membrane; sequence VLWLLKKTASQDKGNSTQSINSSYTVIFTSTSTYYVFYI. Residues N896 and N902 are each glycosylated (N-linked (GlcNAc...) asparagine). The discontinuously helical transmembrane segment at 921-941 threads the bilayer; that stretch reads YVGVADTLLALGFFRGLPLVH. Over 942 to 992 the chain is Cytoplasmic; the sequence is TLITVSKILHHKMLHAVLQAPMSTLNALKAGGILNRFSKDIAILDDLLPLT. The chain crosses the membrane as a helical span at residues 993 to 1013; that stretch reads IFDFVQLLLIVIGAVTVVSAL. Over 1014–1015 the chain is Extracellular; the sequence is QP. The chain crosses the membrane as a helical span at residues 1016–1036; the sequence is YIFLATVPVIAAFIMLRAYFL. Residues 1037 to 1097 are Cytoplasmic-facing; the sequence is HTSQQLKQLE…TANWFLYLST (61 aa). Residues 1098–1118 traverse the membrane as a helical segment; that stretch reads LRWFQMRMEIIFVIFFIAITF. Over 1119–1132 the chain is Extracellular; it reads ISILTTGEGVGAVG. A helical transmembrane segment spans residues 1133–1153; that stretch reads IILTLAMNIMGTLQWAVNSSI. The Cytoplasmic segment spans residues 1154–1484; it reads DVDSLMRSVS…TEEEVQETRL (331 aa). Positions 1214-1447 constitute an ABC transporter 2 domain; sequence MTVKDLTAKY…KSLFRQAISP (234 aa). ATP contacts are provided by residues Y1223 and 1248-1255; that span reads GRTGSGKS. The interaction with GORASP2 stretch occupies residues 1390–1484; that stretch reads RTLKQAFADC…TEEEVQETRL (95 aa). A lipid anchor (S-palmitoyl cysteine) is attached at C1399. Phosphoserine is present on residues S1448 and S1460. The segment covering 1456 to 1465 has biased composition (basic residues); that stretch reads HRNSSKHKSR. The interval 1456–1484 is disordered; that stretch reads HRNSSKHKSRSQIAALKEETEEEVQETRL. A compositionally biased stretch (acidic residues) spans 1474-1484; sequence ETEEEVQETRL. The short motif at 1482–1484 is the PDZ-binding element; it reads TRL.

It belongs to the ABC transporter superfamily. ABCC family. CFTR transporter (TC 3.A.1.202) subfamily. Monomer; does not require oligomerization for channel activity. May form oligomers in the membrane. Interacts with SLC26A3, SLC26A6 and NHERF1. Interacts with SHANK2. Interacts with MYO6. Interacts (via C-terminus) with GOPC (via PDZ domain); this promotes CFTR internalization and thereby decreases channel activity. Interacts with SLC4A7 through NHERF1. Found in a complex with MYO5B and RAB11A. Interacts with ANO1. Interacts with SLC26A8. Interacts with AHCYL1; the interaction increases CFTR activity. Interacts with CSE1L. The core-glycosylated form interacts with GORASP2 (via PDZ GRASP-type 1 domain) in respone to ER stress. Interacts with MARCHF2; the interaction leads to CFTR ubiqtuitination and degradation. Interacts with ADGRG2. In terms of processing, N-glycosylated. Phosphorylated; cAMP treatment promotes phosphorylation and activates the channel. Dephosphorylation decreases the ATPase activity (in vitro). Phosphorylation at PKA sites activates the channel. Phosphorylation at PKC sites enhances the response to phosphorylation by PKA. Phosphorylated by AMPK; this inhibits channel activity. Post-translationally, ubiquitinated, leading to its degradation in the lysosome. Deubiquitination by USP10 in early endosomes enhances its endocytic recycling to the cell membrane. Ubiquitinated by RNF185 during ER stress. Ubiquitinated by MARCHF2.

It localises to the apical cell membrane. Its subcellular location is the early endosome membrane. It is found in the cell membrane. The protein resides in the recycling endosome membrane. The protein localises to the endoplasmic reticulum membrane. It localises to the nucleus. It catalyses the reaction ATP + H2O + closed Cl(-) channel = ADP + phosphate + open Cl(-) channel.. The catalysed reaction is chloride(in) = chloride(out). The enzyme catalyses hydrogencarbonate(in) = hydrogencarbonate(out). It carries out the reaction ATP + H2O = ADP + phosphate + H(+). Functionally, epithelial ion channel that plays an important role in the regulation of epithelial ion and water transport and fluid homeostasis. Mediates the transport of chloride ions across the cell membrane. Possesses an intrinsic ATPase activity and utilizes ATP to gate its channel; the passive flow of anions through the channel is gated by cycles of ATP binding and hydrolysis by the ATP-binding domains. The ion channel is also permeable to HCO(3)(-); selectivity depends on the extracellular chloride concentration. Exerts its function also by modulating the activity of other ion channels and transporters. Contributes to the regulation of the pH and the ion content of the epithelial fluid layer. Modulates the activity of the epithelial sodium channel (ENaC) complex, in part by regulating the cell surface expression of the ENaC complex. May regulate bicarbonate secretion and salvage in epithelial cells by regulating the transporter SLC4A7. Can inhibit the chloride channel activity of ANO1. Plays a role in the chloride and bicarbonate homeostasis during sperm epididymal maturation and capacitation. The polypeptide is Cystic fibrosis transmembrane conductance regulator (Mustela putorius furo (European domestic ferret)).